The primary structure comprises 76 residues: Sec-independent protein translocase protein TatA (76 aa).

Residues Met1–Phe21 form a helical membrane-spanning segment. Residues Val44–Glu57 are compositionally biased toward basic and acidic residues. The interval Val44 to Lys76 is disordered. The span at Ala62 to Lys76 shows a compositional bias: polar residues.

This sequence belongs to the TatA/E family. As to quaternary structure, the Tat system comprises two distinct complexes: a TatABC complex, containing multiple copies of TatA, TatB and TatC subunits, and a separate TatA complex, containing only TatA subunits. Substrates initially bind to the TatABC complex, which probably triggers association of the separate TatA complex to form the active translocon.

It localises to the cell membrane. Its function is as follows. Part of the twin-arginine translocation (Tat) system that transports large folded proteins containing a characteristic twin-arginine motif in their signal peptide across membranes. TatA could form the protein-conducting channel of the Tat system. The polypeptide is Sec-independent protein translocase protein TatA (Leifsonia xyli subsp. xyli (strain CTCB07)).